Reading from the N-terminus, the 354-residue chain is MTELKNDRYLRALLRQPVDVTPVWMMRQAGRYLPEYKATRAQAGDFMSLCKNAELACEVTLQPLRRYPLDAAILFSDILTVPDAMGLGLYFEAGEGPRFTSPVTCKADVDKLPIPDPEDELGYVMNAVRTIRRELKGEVPLIGFSGSPWTLATYMVEGGSSKAFTVIKKMMYADPQALHALLDKLAKSVTLYLNAQIKAGAQAVMIFDTWGGVLTGRDYQQFSLYYMHKIVDGLVRENDGRRVPVTLFTKGGGQWLEAMAETGCDALGLDWTTDIADARRRVGNKVALQGNMDPSMLYAPPARIEEEVATILAGFGHGEGHVFNLGHGIHQDVPPEHAGVFVEAVHRLSEQYHR.

Residues 27-31, Asp-77, Tyr-154, Thr-209, and His-327 each bind substrate; that span reads RQAGR.

This sequence belongs to the uroporphyrinogen decarboxylase family. In terms of assembly, homodimer.

The protein localises to the cytoplasm. It carries out the reaction uroporphyrinogen III + 4 H(+) = coproporphyrinogen III + 4 CO2. It functions in the pathway porphyrin-containing compound metabolism; protoporphyrin-IX biosynthesis; coproporphyrinogen-III from 5-aminolevulinate: step 4/4. Catalyzes the decarboxylation of four acetate groups of uroporphyrinogen-III to yield coproporphyrinogen-III. The sequence is that of Uroporphyrinogen decarboxylase from Escherichia coli (strain 55989 / EAEC).